We begin with the raw amino-acid sequence, 314 residues long: Probable cell division protein WhiA (314 aa).

Positions 274-308 (SLKELGEMISTGPISKSGVNHRLRKLNELADKIRS) form a DNA-binding region, H-T-H motif.

It belongs to the WhiA family.

Its function is as follows. Involved in cell division and chromosome segregation. This Staphylococcus haemolyticus (strain JCSC1435) protein is Probable cell division protein WhiA.